Here is a 131-residue protein sequence, read N- to C-terminus: uncharacterized protein (131 aa).

The CCHC-type; degenerate zinc finger occupies 64 to 81; that stretch reads VNCDKCGKPGNVKNDCPG.

This is an uncharacterized protein from Homo sapiens (Human).